Here is a 168-residue protein sequence, read N- to C-terminus: Ribosome maturation factor RimM (168 aa).

The PRC barrel domain maps to 96-168 (VDEYYWGDLI…TIRVDWQKDW (73 aa)).

Belongs to the RimM family. In terms of assembly, binds ribosomal protein uS19.

It is found in the cytoplasm. In terms of biological role, an accessory protein needed during the final step in the assembly of 30S ribosomal subunit, possibly for assembly of the head region. Essential for efficient processing of 16S rRNA. May be needed both before and after RbfA during the maturation of 16S rRNA. It has affinity for free ribosomal 30S subunits but not for 70S ribosomes. The polypeptide is Ribosome maturation factor RimM (Aromatoleum aromaticum (strain DSM 19018 / LMG 30748 / EbN1) (Azoarcus sp. (strain EbN1))).